Here is a 608-residue protein sequence, read N- to C-terminus: Chaperone protein DnaK (608 aa).

Residue Thr-174 is modified to Phosphothreonine; by autocatalysis. Positions 493 to 505 are enriched in basic and acidic residues; that stretch reads YEEEDRKRKESAE. Disordered stretches follow at residues 493–514 and 577–608; these read YEEEDRKRKESAETRNNADSMV and GQAAGANPGAQTTGGEQGNVYDAEYKVVDDDK. The segment covering 577–590 has biased composition (low complexity); sequence GQAAGANPGAQTTG. A compositionally biased stretch (basic and acidic residues) spans 599 to 608; sequence AEYKVVDDDK.

The protein belongs to the heat shock protein 70 family.

Functionally, acts as a chaperone. This chain is Chaperone protein DnaK, found in Acetivibrio thermocellus (strain ATCC 27405 / DSM 1237 / JCM 9322 / NBRC 103400 / NCIMB 10682 / NRRL B-4536 / VPI 7372) (Clostridium thermocellum).